Here is a 344-residue protein sequence, read N- to C-terminus: Cinnamoyl-CoA reductase 1 (344 aa).

Phosphoserine is present on Ser-7. Residues 17–23, Arg-42, Lys-48, 68–69, 88–90, Tyr-161, Lys-165, 188–191, and Ser-203 each bind NADP(+); these read GAGGYIA, DL, TAS, and PVLV. A disulfide bond links Cys-154 and Cys-162. The active-site Proton donor is Lys-165. Residues 317–344 form a disordered region; that stretch reads QEKGHLAPPPPPPSASQESVENGIKIGS.

Belongs to the NAD(P)-dependent epimerase/dehydratase family. Dihydroflavonol-4-reductase subfamily. Expressed in leaves, stems and flowers.

The catalysed reaction is (E)-cinnamaldehyde + NADP(+) + CoA = (E)-cinnamoyl-CoA + NADPH + H(+). Its pathway is aromatic compound metabolism; phenylpropanoid biosynthesis. Functionally, involved in the latter stages of lignin biosynthesis. Catalyzes one of the last steps of monolignol biosynthesis, the conversion of cinnamoyl-CoAs into their corresponding cinnamaldehydes. The chain is Cinnamoyl-CoA reductase 1 from Arabidopsis thaliana (Mouse-ear cress).